The primary structure comprises 103 residues: Small ribosomal subunit protein uS10 (103 aa).

The protein belongs to the universal ribosomal protein uS10 family. As to quaternary structure, part of the 30S ribosomal subunit.

Functionally, involved in the binding of tRNA to the ribosomes. This Actinobacillus pleuropneumoniae serotype 5b (strain L20) protein is Small ribosomal subunit protein uS10.